The sequence spans 163 residues: Phosphopantetheine adenylyltransferase (163 aa).

Serine 10 provides a ligand contact to substrate. Residues 10–11 and histidine 18 each bind ATP; that span reads SF. The substrate site is built by lysine 42, leucine 74, and arginine 88. Residues 89 to 91, glutamate 99, and 124 to 130 each bind ATP; these read GLR and YSFLSSS.

This sequence belongs to the bacterial CoaD family. Homohexamer. Mg(2+) serves as cofactor.

The protein localises to the cytoplasm. It catalyses the reaction (R)-4'-phosphopantetheine + ATP + H(+) = 3'-dephospho-CoA + diphosphate. It participates in cofactor biosynthesis; coenzyme A biosynthesis; CoA from (R)-pantothenate: step 4/5. Functionally, reversibly transfers an adenylyl group from ATP to 4'-phosphopantetheine, yielding dephospho-CoA (dPCoA) and pyrophosphate. This chain is Phosphopantetheine adenylyltransferase, found in Bacillus mycoides (strain KBAB4) (Bacillus weihenstephanensis).